Consider the following 56-residue polypeptide: Small ribosomal subunit protein uS14 (56 aa).

Zn(2+)-binding residues include cysteine 21, cysteine 24, cysteine 39, and cysteine 42.

It belongs to the universal ribosomal protein uS14 family. The cofactor is Zn(2+).

In Eremothecium gossypii (strain ATCC 10895 / CBS 109.51 / FGSC 9923 / NRRL Y-1056) (Yeast), this protein is Small ribosomal subunit protein uS14 (RPS29).